A 54-amino-acid polypeptide reads, in one-letter code: Ovomucoid (54 aa).

In terms of domain architecture, Kazal-like spans 4–54 (VDCSEYPKPVCSPEYMPLCGSDSKTYNNKCDFCSAVVESNGTLTLGHFGKC). Intrachain disulfides connect Cys6/Cys36, Cys14/Cys33, and Cys22/Cys54. A glycan (N-linked (GlcNAc...) asparagine) is linked at Asn43.

The protein localises to the secreted. The sequence is that of Ovomucoid from Casuarius casuarius (Southern cassowary).